The sequence spans 282 residues: Phosphatidylserine decarboxylase proenzyme (282 aa).

Residues D88, H145, and S248 each act as charge relay system; for autoendoproteolytic cleavage activity in the active site. Catalysis depends on S248, which acts as the Schiff-base intermediate with substrate; via pyruvic acid; for decarboxylase activity. The residue at position 248 (S248) is a Pyruvic acid (Ser); by autocatalysis.

Belongs to the phosphatidylserine decarboxylase family. PSD-B subfamily. Prokaryotic type I sub-subfamily. In terms of assembly, heterodimer of a large membrane-associated beta subunit and a small pyruvoyl-containing alpha subunit. Requires pyruvate as cofactor. In terms of processing, is synthesized initially as an inactive proenzyme. Formation of the active enzyme involves a self-maturation process in which the active site pyruvoyl group is generated from an internal serine residue via an autocatalytic post-translational modification. Two non-identical subunits are generated from the proenzyme in this reaction, and the pyruvate is formed at the N-terminus of the alpha chain, which is derived from the carboxyl end of the proenzyme. The autoendoproteolytic cleavage occurs by a canonical serine protease mechanism, in which the side chain hydroxyl group of the serine supplies its oxygen atom to form the C-terminus of the beta chain, while the remainder of the serine residue undergoes an oxidative deamination to produce ammonia and the pyruvoyl prosthetic group on the alpha chain. During this reaction, the Ser that is part of the protease active site of the proenzyme becomes the pyruvoyl prosthetic group, which constitutes an essential element of the active site of the mature decarboxylase.

It is found in the cell membrane. The enzyme catalyses a 1,2-diacyl-sn-glycero-3-phospho-L-serine + H(+) = a 1,2-diacyl-sn-glycero-3-phosphoethanolamine + CO2. The protein operates within phospholipid metabolism; phosphatidylethanolamine biosynthesis; phosphatidylethanolamine from CDP-diacylglycerol: step 2/2. Its function is as follows. Catalyzes the formation of phosphatidylethanolamine (PtdEtn) from phosphatidylserine (PtdSer). In Dechloromonas aromatica (strain RCB), this protein is Phosphatidylserine decarboxylase proenzyme.